Reading from the N-terminus, the 139-residue chain is uncharacterized protein (139 aa).

This is an uncharacterized protein from Ostreid herpesvirus 1 (isolate France) (OsHV-1).